Reading from the N-terminus, the 228-residue chain is Woronin body membrane protein wscA (228 aa).

The next 4 membrane-spanning stretches (helical) occupy residues 89–109, 130–150, 162–182, and 185–205; these read MTLY…GILQ, LIVS…IAGA, AGFM…LAFA, and FLPE…IGTY.

This sequence belongs to the peroxisomal membrane protein PXMP2/4 family. As to quaternary structure, self-assembles into detergent-resistant oligomers and forms a complex with hexA assemblies.

It is found in the peroxisome membrane. Its subcellular location is the cell septum. Woronin sorting complex protein involved in both Woronin bodies (WB) formation and inherence. Localizes to large peroxisome membranes where it self-assembles into detergent-resistant oligomers that envelop hex-1 assemblies, producing asymmetrical nascent WBs. These structures are then delivered to the cell cortex, which permits partitioning of the nascent WB and WB inheritance. This Aspergillus fumigatus (strain ATCC MYA-4609 / CBS 101355 / FGSC A1100 / Af293) (Neosartorya fumigata) protein is Woronin body membrane protein wscA.